The following is a 285-amino-acid chain: Chalcone synthase 6-4 (285 aa).

Cys-60 is an active-site residue.

This sequence belongs to the thiolase-like superfamily. Chalcone/stilbene synthases family.

The enzyme catalyses (E)-4-coumaroyl-CoA + 3 malonyl-CoA + 3 H(+) = 2',4,4',6'-tetrahydroxychalcone + 3 CO2 + 4 CoA. Its pathway is secondary metabolite biosynthesis; flavonoid biosynthesis. Functionally, the primary product of this enzyme is 4,2',4',6'-tetrahydroxychalcone (also termed naringenin-chalcone or chalcone) which can under specific conditions spontaneously isomerize into naringenin. The polypeptide is Chalcone synthase 6-4 (CHS6-4) (Medicago sativa (Alfalfa)).